The sequence spans 160 residues: Transcription antitermination protein NusB (160 aa).

The protein belongs to the NusB family.

Its function is as follows. Involved in transcription antitermination. Required for transcription of ribosomal RNA (rRNA) genes. Binds specifically to the boxA antiterminator sequence of the ribosomal RNA (rrn) operons. This is Transcription antitermination protein NusB from Rhizobium rhizogenes (strain K84 / ATCC BAA-868) (Agrobacterium radiobacter).